The primary structure comprises 217 residues: Ras-related protein RABA5b (217 aa).

Residue 19 to 26 (GDSAVGKS) participates in GTP binding. The short motif at 41 to 49 (SKATIGVEF) is the Effector region element. Residues 67-71 (DTAGQ), 125-128 (NKCD), and 155-156 (SA) contribute to the GTP site. S-geranylgeranyl cysteine attachment occurs at residues cysteine 214 and cysteine 215.

This sequence belongs to the small GTPase superfamily. Rab family.

The protein resides in the cell membrane. Its function is as follows. Intracellular vesicle trafficking and protein transport. The sequence is that of Ras-related protein RABA5b (RABA5B) from Arabidopsis thaliana (Mouse-ear cress).